The primary structure comprises 209 residues: Chaperone protein TorD (209 aa).

Belongs to the TorD/DmsD family. TorD subfamily.

It localises to the cytoplasm. Functionally, involved in the biogenesis of TorA. Acts on TorA before the insertion of the molybdenum cofactor and, as a result, probably favors a conformation of the apoenzyme that is competent for acquiring the cofactor. This chain is Chaperone protein TorD, found in Shewanella baltica (strain OS185).